The chain runs to 219 residues: Uracil-DNA glycosylase (219 aa).

Asp59 serves as the catalytic Proton acceptor.

This sequence belongs to the uracil-DNA glycosylase (UDG) superfamily. UNG family.

It localises to the cytoplasm. The enzyme catalyses Hydrolyzes single-stranded DNA or mismatched double-stranded DNA and polynucleotides, releasing free uracil.. In terms of biological role, excises uracil residues from the DNA which can arise as a result of misincorporation of dUMP residues by DNA polymerase or due to deamination of cytosine. In Staphylococcus haemolyticus (strain JCSC1435), this protein is Uracil-DNA glycosylase.